A 406-amino-acid chain; its full sequence is Probable 2,3-bisphosphoglycerate-independent phosphoglycerate mutase (406 aa).

The protein belongs to the BPG-independent phosphoglycerate mutase family. A-PGAM subfamily.

It carries out the reaction (2R)-2-phosphoglycerate = (2R)-3-phosphoglycerate. The protein operates within carbohydrate degradation; glycolysis; pyruvate from D-glyceraldehyde 3-phosphate: step 3/5. Its function is as follows. Catalyzes the interconversion of 2-phosphoglycerate and 3-phosphoglycerate. This Thermus thermophilus (strain ATCC BAA-163 / DSM 7039 / HB27) protein is Probable 2,3-bisphosphoglycerate-independent phosphoglycerate mutase.